The sequence spans 244 residues: Pyridoxine 5'-phosphate synthase (244 aa).

Residue asparagine 9 coordinates 3-amino-2-oxopropyl phosphate. 11-12 (DH) provides a ligand contact to 1-deoxy-D-xylulose 5-phosphate. Residue arginine 20 participates in 3-amino-2-oxopropyl phosphate binding. Histidine 45 functions as the Proton acceptor in the catalytic mechanism. 1-deoxy-D-xylulose 5-phosphate contacts are provided by arginine 47 and histidine 52. Residue glutamate 72 is the Proton acceptor of the active site. Threonine 102 contributes to the 1-deoxy-D-xylulose 5-phosphate binding site. The active-site Proton donor is histidine 193. 3-amino-2-oxopropyl phosphate-binding positions include glycine 194 and 215-216 (GH).

Belongs to the PNP synthase family. In terms of assembly, homooctamer; tetramer of dimers.

The protein resides in the cytoplasm. It carries out the reaction 3-amino-2-oxopropyl phosphate + 1-deoxy-D-xylulose 5-phosphate = pyridoxine 5'-phosphate + phosphate + 2 H2O + H(+). The protein operates within cofactor biosynthesis; pyridoxine 5'-phosphate biosynthesis; pyridoxine 5'-phosphate from D-erythrose 4-phosphate: step 5/5. Catalyzes the complicated ring closure reaction between the two acyclic compounds 1-deoxy-D-xylulose-5-phosphate (DXP) and 3-amino-2-oxopropyl phosphate (1-amino-acetone-3-phosphate or AAP) to form pyridoxine 5'-phosphate (PNP) and inorganic phosphate. The protein is Pyridoxine 5'-phosphate synthase of Blochmanniella pennsylvanica (strain BPEN).